Consider the following 290-residue polypeptide: RIO-type serine/threonine-protein kinase Rio1 (290 aa).

The Protein kinase domain maps to 76–290 (TEYIGIVNSG…PIDEAMIKQL (215 aa)). Residues 82 to 90 (VNSGKEAVV) and K103 each bind ATP. Residue D214 is the Proton acceptor of the active site. Mg(2+) is bound by residues N219 and D231. The 4-aspartylphosphate intermediate role is filled by D231.

Belongs to the protein kinase superfamily. RIO-type Ser/Thr kinase family.

The enzyme catalyses L-seryl-[protein] + ATP = O-phospho-L-seryl-[protein] + ADP + H(+). It catalyses the reaction L-threonyl-[protein] + ATP = O-phospho-L-threonyl-[protein] + ADP + H(+). The catalysed reaction is ATP + H2O = ADP + phosphate + H(+). Its function is as follows. Despite the protein kinase domain is proposed to act predominantly as an ATPase. In Methanocaldococcus jannaschii (strain ATCC 43067 / DSM 2661 / JAL-1 / JCM 10045 / NBRC 100440) (Methanococcus jannaschii), this protein is RIO-type serine/threonine-protein kinase Rio1 (rio1).